A 179-amino-acid chain; its full sequence is uncharacterized protein (179 aa).

Positions 53–82 (SPEREDPESPTRGVDEVDGACSEPPTPRPE) are disordered. Residues 54-67 (PEREDPESPTRGVD) are compositionally biased toward basic and acidic residues.

This is an uncharacterized protein from Ictaluridae (bullhead catfishes).